We begin with the raw amino-acid sequence, 197 residues long: MSAGEIDRLIGLLARLPGLGPRSARRAALHLLKRRESLMDPLMEALGAVAASVRLCPVCGTLDTRAPCSICADPRRDGTLICVVRDVADLWALERGGVFSGRYHVLGGLLSAIDGVGPEDLGLDRLAARVAEGPVVEVILALPATVEGQTTAHVIADLIEPKGITVSGLAQGVPVGGELDYLDDGTLTAALRARRPV.

A C4-type zinc finger spans residues 56-71 (CPVCGTLDTRAPCSIC). The region spanning 79-174 (TLICVVRDVA…TVSGLAQGVP (96 aa)) is the Toprim domain.

It belongs to the RecR family.

May play a role in DNA repair. It seems to be involved in an RecBC-independent recombinational process of DNA repair. It may act with RecF and RecO. This is Recombination protein RecR from Rhodospirillum rubrum (strain ATCC 11170 / ATH 1.1.1 / DSM 467 / LMG 4362 / NCIMB 8255 / S1).